The chain runs to 144 residues: Glycophorin-A (144 aa).

Over residues 1–25 (SSTTVPATHTSSSSLGPEQYVSSQS) the composition is skewed to polar residues. Residues 1-55 (SSTTVPATHTSSSSLGPEQYVSSQSNDKHTSDSHPTPTSAHEVTTEFSGRTHYPP) are disordered. Ser-2 is a glycosylation site (O-linked (GalNAc...) serine). O-linked (GalNAc...) threonine glycans are attached at residues Thr-3, Thr-4, Thr-8, and Thr-10. 6 O-linked (GalNAc...) serine glycosylation sites follow: Ser-11, Ser-12, Ser-13, Ser-14, Ser-22, and Ser-23. O-linked (GalNAc...) threonine glycosylation is found at Thr-30, Thr-36, Thr-38, Thr-44, and Thr-45. Residues 33 to 48 (SHPTPTSAHEVTTEFS) show a composition bias toward polar residues. An O-linked (GalNAc...) serine glycan is attached at Ser-48. A glycan (O-linked (GalNAc...) threonine) is linked at Thr-51. Residues 70–92 (LVIALIIFGVMAGVIGTILFISY) form a helical membrane-spanning segment. Positions 101–144 (SESDVQPLPPPDAEVPLSSVEIEDPEETDELNSFTKPNQERNES) are disordered. Residue Ser-118 is modified to Phosphoserine. Residues 121 to 130 (EIEDPEETDE) show a composition bias toward acidic residues.

Belongs to the glycophorin-A family. In terms of assembly, homodimer. Component of the ankyrin-1 complex in the erythrocyte, composed of ANK1, RHCE, RHAG, SLC4A1, EPB42, GYPA, GYPB and AQP1. Interacts with SLC4A1; a GYPA monomer is bound at each end of the SLC4A1 dimer forming a heterotetramer.

It is found in the membrane. Functionally, component of the ankyrin-1 complex, a multiprotein complex involved in the stability and shape of the erythrocyte membrane. Glycophorin A is the major intrinsic membrane protein of the erythrocyte. The N-terminal glycosylated segment, which lies outside the erythrocyte membrane, has MN blood group receptors. Appears to be important for the function of SLC4A1 and is required for high activity of SLC4A1. May be involved in translocation of SLC4A1 to the plasma membrane. The sequence is that of Glycophorin-A from Macaca fuscata fuscata (Japanese macaque).